The sequence spans 376 residues: Glucose-1-phosphate adenylyltransferase (376 aa).

Alpha-D-glucose 1-phosphate is bound by residues Y101, G166, 181 to 182 (EK), and S192.

The protein belongs to the bacterial/plant glucose-1-phosphate adenylyltransferase family. Homotetramer.

The catalysed reaction is alpha-D-glucose 1-phosphate + ATP + H(+) = ADP-alpha-D-glucose + diphosphate. The protein operates within glycan biosynthesis; glycogen biosynthesis. Its function is as follows. Involved in the biosynthesis of ADP-glucose, a building block required for the elongation reactions to produce glycogen. Catalyzes the reaction between ATP and alpha-D-glucose 1-phosphate (G1P) to produce pyrophosphate and ADP-Glc. The protein is Glucose-1-phosphate adenylyltransferase of Bacillus cereus (strain ATCC 14579 / DSM 31 / CCUG 7414 / JCM 2152 / NBRC 15305 / NCIMB 9373 / NCTC 2599 / NRRL B-3711).